Consider the following 287-residue polypeptide: ATP synthase gamma chain (287 aa).

It belongs to the ATPase gamma chain family. F-type ATPases have 2 components, CF(1) - the catalytic core - and CF(0) - the membrane proton channel. CF(1) has five subunits: alpha(3), beta(3), gamma(1), delta(1), epsilon(1). CF(0) has three main subunits: a, b and c.

The protein resides in the cell inner membrane. In terms of biological role, produces ATP from ADP in the presence of a proton gradient across the membrane. The gamma chain is believed to be important in regulating ATPase activity and the flow of protons through the CF(0) complex. This chain is ATP synthase gamma chain, found in Stenotrophomonas maltophilia (strain K279a).